The following is a 410-amino-acid chain: Peptidase T (410 aa).

Position 79 (H79) interacts with Zn(2+). D81 is an active-site residue. Residue D142 participates in Zn(2+) binding. E176 functions as the Proton acceptor in the catalytic mechanism. Zn(2+)-binding residues include E177, D199, and H381.

This sequence belongs to the peptidase M20B family. Requires Zn(2+) as cofactor.

It localises to the cytoplasm. It carries out the reaction Release of the N-terminal residue from a tripeptide.. In terms of biological role, cleaves the N-terminal amino acid of tripeptides. This Bacillus thuringiensis (strain Al Hakam) protein is Peptidase T.